The following is a 421-amino-acid chain: UDP-N-acetylglucosamine 1-carboxyvinyltransferase (421 aa).

22–23 serves as a coordination point for phosphoenolpyruvate; that stretch reads KN. Arginine 95 provides a ligand contact to UDP-N-acetyl-alpha-D-glucosamine. The active-site Proton donor is the cysteine 119. The residue at position 119 (cysteine 119) is a 2-(S-cysteinyl)pyruvic acid O-phosphothioketal. UDP-N-acetyl-alpha-D-glucosamine is bound by residues 124 to 128, aspartate 309, and isoleucine 331; that span reads RPVDQ.

It belongs to the EPSP synthase family. MurA subfamily.

The protein localises to the cytoplasm. It catalyses the reaction phosphoenolpyruvate + UDP-N-acetyl-alpha-D-glucosamine = UDP-N-acetyl-3-O-(1-carboxyvinyl)-alpha-D-glucosamine + phosphate. The protein operates within cell wall biogenesis; peptidoglycan biosynthesis. Functionally, cell wall formation. Adds enolpyruvyl to UDP-N-acetylglucosamine. This is UDP-N-acetylglucosamine 1-carboxyvinyltransferase from Leptothrix cholodnii (strain ATCC 51168 / LMG 8142 / SP-6) (Leptothrix discophora (strain SP-6)).